We begin with the raw amino-acid sequence, 173 residues long: Small ribosomal subunit protein uS13 (173 aa).

The span at glycine 130–arginine 143 shows a compositional bias: basic residues. The interval glycine 130 to glycine 155 is disordered.

It belongs to the universal ribosomal protein uS13 family. In terms of assembly, part of the 30S ribosomal subunit. Forms a loose heterodimer with protein S19. Forms two bridges to the 50S subunit in the 70S ribosome.

Located at the top of the head of the 30S subunit, it contacts several helices of the 16S rRNA. In the 70S ribosome it contacts the 23S rRNA (bridge B1a) and protein L5 of the 50S subunit (bridge B1b), connecting the 2 subunits; these bridges are implicated in subunit movement. This Haloquadratum walsbyi (strain DSM 16790 / HBSQ001) protein is Small ribosomal subunit protein uS13.